Consider the following 411-residue polypeptide: Multifunctional CCA protein (411 aa).

ATP-binding residues include G8 and R11. CTP is bound by residues G8 and R11. Mg(2+) is bound by residues D21 and D23. The ATP site is built by R91, R143, and R146. CTP contacts are provided by R91, R143, and R146. The region spanning 232-333 (TGVHVMMVID…MRLLERCDAL (102 aa)) is the HD domain.

This sequence belongs to the tRNA nucleotidyltransferase/poly(A) polymerase family. Bacterial CCA-adding enzyme type 1 subfamily. Monomer. Can also form homodimers and oligomers. Requires Mg(2+) as cofactor. The cofactor is Ni(2+).

It catalyses the reaction a tRNA precursor + 2 CTP + ATP = a tRNA with a 3' CCA end + 3 diphosphate. It carries out the reaction a tRNA with a 3' CCA end + 2 CTP + ATP = a tRNA with a 3' CCACCA end + 3 diphosphate. Functionally, catalyzes the addition and repair of the essential 3'-terminal CCA sequence in tRNAs without using a nucleic acid template. Adds these three nucleotides in the order of C, C, and A to the tRNA nucleotide-73, using CTP and ATP as substrates and producing inorganic pyrophosphate. tRNA 3'-terminal CCA addition is required both for tRNA processing and repair. Also involved in tRNA surveillance by mediating tandem CCA addition to generate a CCACCA at the 3' terminus of unstable tRNAs. While stable tRNAs receive only 3'-terminal CCA, unstable tRNAs are marked with CCACCA and rapidly degraded. The polypeptide is Multifunctional CCA protein (Cupriavidus necator (strain ATCC 17699 / DSM 428 / KCTC 22496 / NCIMB 10442 / H16 / Stanier 337) (Ralstonia eutropha)).